Reading from the N-terminus, the 557-residue chain is Hemolysin transporter protein ShlB (557 aa).

The signal sequence occupies residues 1–18; it reads MIKKITALTLLVSTALSA. The POTRA domain occupies 79 to 152; that stretch reads LPIAGVYLQG…GELGLSVTEG (74 aa).

The protein belongs to the TPS (TC 1.B.20) family.

It is found in the cell outer membrane. Functionally, interacts with the cell-bound hemolysin. Necessary for the extracellular secretion and activation of hemolysin. Member of a two partner secretion pathway (TPS) in which it mediates the secretion of hemolysin. The sequence is that of Hemolysin transporter protein ShlB (shlB) from Serratia marcescens.